A 290-amino-acid chain; its full sequence is 4-hydroxybenzoate octaprenyltransferase (290 aa).

The next 8 helical transmembrane spans lie at 23–43 (IGAL…TPGV), 46–66 (LWIL…GCVV), 99–119 (LFVV…TMTI), 141–161 (LPQV…FAAV), 163–183 (ESVP…AVAY), 213–233 (LIIG…GELN), 234–254 (GLGW…VYQQ), and 268–288 (AFMN…MSYW).

The protein belongs to the UbiA prenyltransferase family. Requires Mg(2+) as cofactor.

It localises to the cell inner membrane. The enzyme catalyses all-trans-octaprenyl diphosphate + 4-hydroxybenzoate = 4-hydroxy-3-(all-trans-octaprenyl)benzoate + diphosphate. Its pathway is cofactor biosynthesis; ubiquinone biosynthesis. In terms of biological role, catalyzes the prenylation of para-hydroxybenzoate (PHB) with an all-trans polyprenyl group. Mediates the second step in the final reaction sequence of ubiquinone-8 (UQ-8) biosynthesis, which is the condensation of the polyisoprenoid side chain with PHB, generating the first membrane-bound Q intermediate 3-octaprenyl-4-hydroxybenzoate. The sequence is that of 4-hydroxybenzoate octaprenyltransferase from Escherichia coli (strain SE11).